A 114-amino-acid chain; its full sequence is Probable 4-amino-4-deoxy-L-arabinose-phosphoundecaprenol flippase subunit ArnE (114 aa).

The next 3 membrane-spanning stretches (helical) occupy residues 41–61 (PWLI…IYLL), 64–84 (LPLS…LVGS), and 94–114 (YHNW…GGLL). An EamA domain is found at 43-112 (LIASVAALGC…IIVGALLLGG (70 aa)).

The protein belongs to the ArnE family. In terms of assembly, heterodimer of ArnE and ArnF.

It is found in the cell inner membrane. Its pathway is bacterial outer membrane biogenesis; lipopolysaccharide biosynthesis. Its function is as follows. Translocates 4-amino-4-deoxy-L-arabinose-phosphoundecaprenol (alpha-L-Ara4N-phosphoundecaprenol) from the cytoplasmic to the periplasmic side of the inner membrane. The protein is Probable 4-amino-4-deoxy-L-arabinose-phosphoundecaprenol flippase subunit ArnE of Aeromonas hydrophila subsp. hydrophila (strain ATCC 7966 / DSM 30187 / BCRC 13018 / CCUG 14551 / JCM 1027 / KCTC 2358 / NCIMB 9240 / NCTC 8049).